A 185-amino-acid chain; its full sequence is UPF0149 protein PD_0802 (185 aa).

This sequence belongs to the UPF0149 family.

The polypeptide is UPF0149 protein PD_0802 (Xylella fastidiosa (strain Temecula1 / ATCC 700964)).